A 469-amino-acid polypeptide reads, in one-letter code: Interstitial collagenase (469 aa).

A signal peptide spans 1-19; that stretch reads MHSFPPLLLLLFWGVVSHS. Residues 20–99 constitute a propeptide, activation peptide; that stretch reads FPATLETQEQ…PRCGVPDVAQ (80 aa). Ser-57 carries the phosphoserine modification. Positions 90-97 match the Cysteine switch motif; sequence PRCGVPDV. Residue Cys-92 coordinates Zn(2+). The interval 98 to 276 is metalloprotease; the sequence is AQFVLTEGNP…VQPIGPQTPK (179 aa). Asn-120 carries an N-linked (GlcNAc...) asparagine glycan. Residues Asp-124 and Asp-158 each contribute to the Ca(2+) site. Residues His-168 and Asp-170 each contribute to the Zn(2+) site. Positions 175, 176, 178, and 180 each coordinate Ca(2+). His-183 is a Zn(2+) binding site. Ca(2+)-binding residues include Gly-190, Gly-192, and Asp-194. Residue His-196 participates in Zn(2+) binding. Ca(2+) contacts are provided by Asp-198, Glu-199, and Glu-201. His-218 is a Zn(2+) binding site. The active site involves Glu-219. Residues His-222 and His-228 each contribute to the Zn(2+) site. The residue at position 274 (Thr-274) is a Phosphothreonine. 4 Hemopexin repeats span residues 275-324, 325-371, 374-422, and 423-466; these read PKAC…WPQL, PNGL…FGFP, VKHI…FPGI, and GHKV…WFNC. Cys-278 and Cys-466 are disulfide-bonded. Ca(2+) is bound by residues Asp-285 and Glu-329. Position 360 is a phosphotyrosine; by PKDCC (Tyr-360). Ca(2+) contacts are provided by Asp-378 and Asp-427.

It belongs to the peptidase M10A family. As to quaternary structure, (Microbial infection) Interacts with HIV-1 Tat. Ca(2+) serves as cofactor. The cofactor is Zn(2+). Post-translationally, undergoes autolytic cleavage to two major forms (22 kDa and 27 kDa). A minor form (25 kDa) is the glycosylated form of the 22 kDa form. The 27 kDa form has no activity while the 22/25 kDa form can act as activator for collagenase. In terms of processing, tyrosine phosphorylated in platelets by PKDCC/VLK.

The protein localises to the secreted. Its subcellular location is the extracellular space. It is found in the extracellular matrix. The enzyme catalyses Cleavage of the triple helix of collagen at about three-quarters of the length of the molecule from the N-terminus, at 775-Gly-|-Ile-776 in the alpha1(I) chain. Cleaves synthetic substrates and alpha-macroglobulins at bonds where P1' is a hydrophobic residue.. With respect to regulation, can be activated without removal of the activation peptide. Its function is as follows. Cleaves collagens of types I, II, and III at one site in the helical domain. Also cleaves collagens of types VII and X. In case of HIV infection, interacts and cleaves the secreted viral Tat protein, leading to a decrease in neuronal Tat's mediated neurotoxicity. This is Interstitial collagenase (MMP1) from Homo sapiens (Human).